Consider the following 85-residue polypeptide: Putative sodium channel toxin Ts34 (85 aa).

Residues 1-17 (MNLPLLLLITILIEIHA) form the signal peptide. The 64-residue stretch at 19 to 82 (KDGYVIYKNS…IYGETGSYCW (64 aa)) folds into the LCN-type CS-alpha/beta domain. Intrachain disulfides connect Cys-30/Cys-81, Cys-34/Cys-57, Cys-43/Cys-62, and Cys-47/Cys-64.

This sequence belongs to the long (4 C-C) scorpion toxin superfamily. Sodium channel inhibitor family. Expressed by the venom gland.

It is found in the secreted. In terms of biological role, putative sodium channel toxin. This chain is Putative sodium channel toxin Ts34, found in Tityus serrulatus (Brazilian scorpion).